Here is a 232-residue protein sequence, read N- to C-terminus: Adenosylcobinamide-GDP ribazoletransferase (232 aa).

The next 6 membrane-spanning stretches (helical) occupy residues 31–51 (LPSF…LGAL), 59–79 (VFFL…GFLD), 102–122 (VGPF…NLYL), 126–146 (PFYF…LMAF), 167–187 (LLIS…YIIS), and 209–229 (VTGD…LLIL).

The protein belongs to the CobS family. It depends on Mg(2+) as a cofactor.

The protein resides in the cell inner membrane. It catalyses the reaction alpha-ribazole + adenosylcob(III)inamide-GDP = adenosylcob(III)alamin + GMP + H(+). The enzyme catalyses alpha-ribazole 5'-phosphate + adenosylcob(III)inamide-GDP = adenosylcob(III)alamin 5'-phosphate + GMP + H(+). It participates in cofactor biosynthesis; adenosylcobalamin biosynthesis; adenosylcobalamin from cob(II)yrinate a,c-diamide: step 7/7. Functionally, joins adenosylcobinamide-GDP and alpha-ribazole to generate adenosylcobalamin (Ado-cobalamin). Also synthesizes adenosylcobalamin 5'-phosphate from adenosylcobinamide-GDP and alpha-ribazole 5'-phosphate. This Thermosipho africanus (strain TCF52B) protein is Adenosylcobinamide-GDP ribazoletransferase.